The primary structure comprises 717 residues: Aryl hydrocarbon receptor nuclear translocator 2 (717 aa).

2 disordered regions span residues 1–20 (MATPAAVNPPEMASDIPGSV) and 35–74 (MAGAMPARGGKRRSGMDFDDEDGEGPSKFSRENHSEIERR). Residue Arg-42 is modified to Omega-N-methylarginine. Positions 63–73 (FSRENHSEIER) are enriched in basic and acidic residues. The bHLH domain occupies 63 to 116 (FSRENHSEIERRRRNKMTQYITELSDMVPTCSALARKPDKLTILRMAVSHMKSM). PAS domains are found at residues 134-209 (TEQE…MTGR) and 323-393 (PVCM…VKLK). The PAC domain maps to 398 to 441 (SVMYRFRTKNREWMLIRTSSFTFQNPYSDEIEYIICTNTNVKQL). A disordered region spans residues 548–717 (NDIQSSSSTG…DLGMFPPFSE (170 aa)). Polar residues-rich tracts occupy residues 549 to 574 (DIQSSSSTGQNMSQISRQLNQSQVAW) and 585 to 605 (QIPSQSSKTQSSPFGIGTSHT). Residues 610-625 (PSSYSPLSSPATSSPS) are compositionally biased toward low complexity. Polar residues predominate over residues 642 to 651 (SGQSSGQFQG). The span at 658–680 (SQWQSQHHGQQSGEQHSHQQPGQ) shows a compositional bias: low complexity.

In terms of assembly, efficient DNA binding requires dimerization with another bHLH protein. Heterodimer with NPAS4. Heterodimer with SIM1. Heterodimer with the aryl hydrocarbon receptor (AHR) or the SIM1 protein. Interacts with TACC3.

It is found in the nucleus. In terms of biological role, transcription factor that plays a role in the development of the hypothalamo-pituitary axis, postnatal brain growth, and visual and renal function. Specifically recognizes the xenobiotic response element (XRE). This chain is Aryl hydrocarbon receptor nuclear translocator 2 (ARNT2), found in Homo sapiens (Human).